The sequence spans 416 residues: Serine hydroxymethyltransferase (416 aa).

Residues L121 and 125 to 127 (GHL) contribute to the (6S)-5,6,7,8-tetrahydrofolate site. The residue at position 229 (K229) is an N6-(pyridoxal phosphate)lysine.

It belongs to the SHMT family. As to quaternary structure, homodimer. Requires pyridoxal 5'-phosphate as cofactor.

It localises to the cytoplasm. The enzyme catalyses (6R)-5,10-methylene-5,6,7,8-tetrahydrofolate + glycine + H2O = (6S)-5,6,7,8-tetrahydrofolate + L-serine. Its pathway is one-carbon metabolism; tetrahydrofolate interconversion. The protein operates within amino-acid biosynthesis; glycine biosynthesis; glycine from L-serine: step 1/1. Functionally, catalyzes the reversible interconversion of serine and glycine with tetrahydrofolate (THF) serving as the one-carbon carrier. This reaction serves as the major source of one-carbon groups required for the biosynthesis of purines, thymidylate, methionine, and other important biomolecules. Also exhibits THF-independent aldolase activity toward beta-hydroxyamino acids, producing glycine and aldehydes, via a retro-aldol mechanism. The polypeptide is Serine hydroxymethyltransferase (Aromatoleum aromaticum (strain DSM 19018 / LMG 30748 / EbN1) (Azoarcus sp. (strain EbN1))).